Reading from the N-terminus, the 23-residue chain is Potassium channel toxin alpha-KTx 13.3 (23 aa).

3 disulfides stabilise this stretch: Cys-2/Cys-15, Cys-5/Cys-20, and Cys-9/Cys-22. The interval 13–20 is interaction with Ca(2+)-activated K(+) channels; it reads GKCINGRC. Position 23 is a tyrosine amide (Tyr-23).

In terms of tissue distribution, expressed by the venom gland.

It is found in the secreted. Functionally, reversibly blocks Shaker B potassium channels, with a dissociation constant of 200 nM. The polypeptide is Potassium channel toxin alpha-KTx 13.3 (Tityus pachyurus (Colombian scorpion)).